Reading from the N-terminus, the 595-residue chain is Indole-3-acetic acid-amido synthetase GH3.3 (595 aa).

The protein belongs to the IAA-amido conjugating enzyme family.

Catalyzes the synthesis of indole-3-acetic acid (IAA)-amino acid conjugates, providing a mechanism for the plant to cope with the presence of excess auxin. Strongly reactive with Glu, Gln, Trp, Asp, Ala, Leu, Phe, Gly, Tyr, Met, Ile and Val. Little or no product formation with His, Ser, Thr, Arg, Lys, or Cys. Also active on pyruvic and butyric acid analogs of IAA, PAA and the synthetic auxin naphthaleneacetic acid (NAA). The two chlorinated synthetic auxin herbicides 2,4-D and 3,6-dichloro-o-anisic acid (dicamba) cannot be used as substrates. The chain is Indole-3-acetic acid-amido synthetase GH3.3 (GH3.3) from Arabidopsis thaliana (Mouse-ear cress).